The sequence spans 361 residues: tRNA/tmRNA (uracil-C(5))-methyltransferase (361 aa).

Residues Q185, Y213, N218, E234, and D294 each coordinate S-adenosyl-L-methionine. Catalysis depends on C319, which acts as the Nucleophile. The active-site Proton acceptor is E353.

The protein belongs to the class I-like SAM-binding methyltransferase superfamily. RNA M5U methyltransferase family. TrmA subfamily.

The enzyme catalyses uridine(54) in tRNA + S-adenosyl-L-methionine = 5-methyluridine(54) in tRNA + S-adenosyl-L-homocysteine + H(+). It catalyses the reaction uridine(341) in tmRNA + S-adenosyl-L-methionine = 5-methyluridine(341) in tmRNA + S-adenosyl-L-homocysteine + H(+). In terms of biological role, dual-specificity methyltransferase that catalyzes the formation of 5-methyluridine at position 54 (m5U54) in all tRNAs, and that of position 341 (m5U341) in tmRNA (transfer-mRNA). This is tRNA/tmRNA (uracil-C(5))-methyltransferase from Pseudomonas putida (strain GB-1).